The sequence spans 274 residues: MPSLAELTKSLSIAFENGDYAACEKLLPPIKIELIKNNLLIPDLSIQNDIYLNDLMITKRILEVGALASIQTFNFDSFENYFNQLKPYYFSNNHKLSESDKKSKLISLYLLNLLSQNNTTKFHSELQYLDKHIKNLEDDSLLSYPIKLDRWLMEGSYQKAWDLLQSGSQNISEFDSFTDILKSAIRDEIAKNTELSYDFLPLSNIKALLFFNNEKETEKFALERNWPIVNSKVYFNNQSKEKADYEDEMMHEEDQKTNIIEKAMDYAISIENIV.

Residues 76 to 251 (DSFENYFNQL…KADYEDEMMH (176 aa)) enclose the PCI domain.

The protein belongs to the proteasome subunit S14 family.

In terms of biological role, acts as a regulatory subunit of the 26S proteasome which is involved in the ATP-dependent degradation of ubiquitinated proteins. Necessary for activation of the CDC28 kinase. This Saccharomyces cerevisiae (strain ATCC 204508 / S288c) (Baker's yeast) protein is 26S proteasome regulatory subunit RPN12 (RPN12).